The chain runs to 327 residues: MCHQKLTISWFAMVLLVSPLMAIWELEKDVYVVEVDWSPGAPGERVVLTCDTSEEDDIIWTSDQSSEVVGSGKTLIVQVKEFSDAGQYTCHKGGETLSHSRLLLHKKEDGIWSTDILKDQKDPKNKTFLKCEAANYSGRFTCWWLTAVSTDLKFSLKSSSSSSDSRSVTCGAASLSTEKVTVDQRDYNKYSVACQEDITCPTAEETLPIELVMEAQHKYKYENYSTGFFIRDIIKPDPPKNLQLKPLKSSQVEVSWEYPDSWSTPHSYFSLKFFVQVYRKKEKKGESLLVDKPSAKIRCSKGGEVRVRAQDHYYNSSWSEWASVSCN.

A signal peptide spans 1 to 22; the sequence is MCHQKLTISWFAMVLLVSPLMA. Positions 23-106 constitute an Ig-like C2-type domain; the sequence is IWELEKDVYV…LSHSRLLLHK (84 aa). Cys-50 and Cys-90 form a disulfide bridge. 4 N-linked (GlcNAc...) asparagine glycosylation sites follow: Asn-125, Asn-135, Asn-223, and Asn-315. In terms of domain architecture, Fibronectin type-III spans 238–327; that stretch reads PPKNLQLKPL…WSEWASVSCN (90 aa).

This sequence belongs to the IL-12B family. In terms of assembly, heterodimer with IL12A; disulfide-linked. The heterodimer is known as interleukin IL-12. Heterodimer with IL23A; disulfide-linked. The heterodimer is known as interleukin IL-23. Also secreted as a monomer. Interacts with NBR1; this interaction promotes IL-12 secretion.

The protein resides in the secreted. Its function is as follows. Cytokine that can act as a growth factor for activated T and NK cells, enhance the lytic activity of NK/lymphokine-activated killer cells, and stimulate the production of IFN-gamma by resting PBMC. In terms of biological role, associates with IL23A to form the IL-23 interleukin, a heterodimeric cytokine which functions in innate and adaptive immunity. IL-23 may constitute with IL-17 an acute response to infection in peripheral tissues. IL-23 binds to a heterodimeric receptor complex composed of IL12RB1 and IL23R, activates the Jak-Stat signaling cascade, stimulates memory rather than naive T-cells and promotes production of pro-inflammatory cytokines. IL-23 induces autoimmune inflammation and thus may be responsible for autoimmune inflammatory diseases and may be important for tumorigenesis. The protein is Interleukin-12 subunit beta (IL12B) of Sigmodon hispidus (Hispid cotton rat).